A 187-amino-acid polypeptide reads, in one-letter code: Orotate phosphoribosyltransferase (187 aa).

5-phospho-alpha-D-ribose 1-diphosphate contacts are provided by residues Arg99, Lys100, Lys103, His105, and 125–133; that span reads DDVITTGGS. 2 residues coordinate orotate: Thr129 and Arg157.

This sequence belongs to the purine/pyrimidine phosphoribosyltransferase family. PyrE subfamily. In terms of assembly, homodimer. It depends on Mg(2+) as a cofactor.

It carries out the reaction orotidine 5'-phosphate + diphosphate = orotate + 5-phospho-alpha-D-ribose 1-diphosphate. The protein operates within pyrimidine metabolism; UMP biosynthesis via de novo pathway; UMP from orotate: step 1/2. Catalyzes the transfer of a ribosyl phosphate group from 5-phosphoribose 1-diphosphate to orotate, leading to the formation of orotidine monophosphate (OMP). In Leptospira borgpetersenii serovar Hardjo-bovis (strain JB197), this protein is Orotate phosphoribosyltransferase.